Consider the following 482-residue polypeptide: O-phosphoseryl-tRNA(Sec) selenium transferase (482 aa).

The interval 1–36 (MKSSFGKKEGEYSRLVSKSSNKLLNSLWEKKQIPEE) is tetramerization. Arginine 69 is a binding site for pyridoxal 5'-phosphate. The tract at residues 90–100 (GRSGNLLEIQP) is phosphate loop (P-loop). Substrate is bound by residues arginine 91, serine 92, and glutamine 99. The residue at position 277 (lysine 277) is an N6-(pyridoxal phosphate)lysine. Residue arginine 306 participates in substrate binding. TRNA is bound at residue arginine 388. The interval 461-482 (DRRGGSSGRRVPMNESFDMEND) is disordered.

This sequence belongs to the SepSecS family. As to quaternary structure, homotetramer formed by a catalytic dimer and a non-catalytic dimer serving as a binding platform that orients tRNASec for catalysis. Each tetramer binds the CCA ends of two tRNAs which point to the active sites of the catalytic dimer. It depends on pyridoxal 5'-phosphate as a cofactor.

The protein localises to the cytoplasm. The catalysed reaction is O-phospho-L-seryl-tRNA(Sec) + selenophosphate + H2O = L-selenocysteinyl-tRNA(Sec) + 2 phosphate. It functions in the pathway aminoacyl-tRNA biosynthesis; selenocysteinyl-tRNA(Sec) biosynthesis; selenocysteinyl-tRNA(Sec) from L-seryl-tRNA(Sec) (archaeal/eukaryal route): step 2/2. Functionally, converts O-phosphoseryl-tRNA(Sec) to selenocysteinyl-tRNA(Sec) required for selenoprotein biosynthesis. In Caenorhabditis briggsae, this protein is O-phosphoseryl-tRNA(Sec) selenium transferase (secs-1).